Reading from the N-terminus, the 138-residue chain is Large ribosomal subunit protein uL16 (138 aa).

It belongs to the universal ribosomal protein uL16 family. Part of the 50S ribosomal subunit.

Its function is as follows. Binds 23S rRNA and is also seen to make contacts with the A and possibly P site tRNAs. The chain is Large ribosomal subunit protein uL16 from Corynebacterium kroppenstedtii (strain DSM 44385 / JCM 11950 / CIP 105744 / CCUG 35717).